The sequence spans 313 residues: Porphobilinogen deaminase (313 aa).

Position 242 is an S-(dipyrrolylmethanemethyl)cysteine (Cys242).

This sequence belongs to the HMBS family. In terms of assembly, monomer. The cofactor is dipyrromethane.

The catalysed reaction is 4 porphobilinogen + H2O = hydroxymethylbilane + 4 NH4(+). Its pathway is porphyrin-containing compound metabolism; protoporphyrin-IX biosynthesis; coproporphyrinogen-III from 5-aminolevulinate: step 2/4. Its function is as follows. Tetrapolymerization of the monopyrrole PBG into the hydroxymethylbilane pre-uroporphyrinogen in several discrete steps. This chain is Porphobilinogen deaminase, found in Erwinia tasmaniensis (strain DSM 17950 / CFBP 7177 / CIP 109463 / NCPPB 4357 / Et1/99).